The primary structure comprises 311 residues: Serpentine receptor class gamma-6 (311 aa).

7 helical membrane passes run 24-44 (MGQL…IYVI), 58-78 (FWLL…FDIF), 101-121 (PLLI…KMVA), 148-168 (LTAC…NILI), 200-220 (YMQI…AILW), 235-255 (IWFA…YLHM), and 266-286 (IFML…VIMI).

The protein belongs to the nematode receptor-like protein srg family.

The protein localises to the membrane. This chain is Serpentine receptor class gamma-6 (srg-6), found in Caenorhabditis elegans.